The chain runs to 87 residues: Cytochrome c oxidase assembly factor 3, mitochondrial (87 aa).

The chain crosses the membrane as a helical span at residues 47 to 69; the sequence is NNLLTAGALGVSVLAIYGYSIFS.

Belongs to the COA3 family.

The protein localises to the mitochondrion membrane. Functionally, plays a critical role in the biogenesis and activity of cytochrome c oxidase (COX) (complex IV). This Drosophila melanogaster (Fruit fly) protein is Cytochrome c oxidase assembly factor 3, mitochondrial (Ccdc56).